The following is a 79-amino-acid chain: Virulence protein MsgA (79 aa).

It belongs to the DinI family.

Its function is as follows. Affects survival in macrophages. The chain is Virulence protein MsgA (msgA) from Salmonella typhi.